The sequence spans 197 residues: Chitin synthase 3 (197 aa).

It belongs to the chitin synthase family. Class III subfamily.

It localises to the cell membrane. The catalysed reaction is [(1-&gt;4)-N-acetyl-beta-D-glucosaminyl](n) + UDP-N-acetyl-alpha-D-glucosamine = [(1-&gt;4)-N-acetyl-beta-D-glucosaminyl](n+1) + UDP + H(+). Polymerizes chitin, a structural polymer of the cell wall and septum, by transferring the sugar moiety of UDP-GlcNAc to the non-reducing end of the growing chitin polymer. The polypeptide is Chitin synthase 3 (CHS3) (Exophiala jeanselmei (Dematiaceous fungus)).